A 93-amino-acid polypeptide reads, in one-letter code: Large ribosomal subunit protein uL23cz/uL23cy (93 aa).

The protein belongs to the universal ribosomal protein uL23 family. In terms of assembly, part of the 50S ribosomal subunit.

It is found in the plastid. It localises to the chloroplast. Its function is as follows. Binds to 23S rRNA. The protein is Large ribosomal subunit protein uL23cz/uL23cy (rpl23-A) of Acorus calamus (Sweet flag).